A 147-amino-acid polypeptide reads, in one-letter code: Ribonuclease H (147 aa).

One can recognise an RNase H type-1 domain in the interval 1 to 142 (MREVIIYTDG…CDELARAAIA (142 aa)). 4 residues coordinate Mg(2+): aspartate 9, glutamate 47, aspartate 69, and aspartate 134.

This sequence belongs to the RNase H family. In terms of assembly, monomer. The cofactor is Mg(2+).

It localises to the cytoplasm. It carries out the reaction Endonucleolytic cleavage to 5'-phosphomonoester.. Its function is as follows. Endonuclease that specifically degrades the RNA of RNA-DNA hybrids. The sequence is that of Ribonuclease H from Symbiobacterium thermophilum (strain DSM 24528 / JCM 14929 / IAM 14863 / T).